The following is a 284-amino-acid chain: Cystinosin homolog (284 aa).

A run of 7 helical transmembrane segments spans residues 3-23 (ALSI…SLSF), 37-57 (IGLS…YSVF), 86-106 (IAFA…CFIY), 116-136 (LGIG…ILGF), 139-159 (VFTW…ITFI), 181-201 (NVLL…LDVA), and 216-236 (LGLS…HYIL). In terms of domain architecture, PQ-loop 1 spans 4 to 70 (LSIISIIIGW…LYFDKLVKNE (67 aa)). A PQ-loop 2 domain is found at 154-208 (LFITFIKYIPQAYLNFKNKSTSGWSVHNVLLDFSGGVLSLLQMFLDVADSGNWNI). The segment at 247–269 (NLNDNNIPNNNNNNNNNINNNTP) is disordered.

This sequence belongs to the cystinosin family.

The protein localises to the lysosome membrane. It carries out the reaction L-cystine(out) + H(+)(out) = L-cystine(in) + H(+)(in). Functionally, cystine/H(+) symporter that mediates export of cystine, the oxidized dimer of cysteine, from lysosomes. This is Cystinosin homolog (ctns) from Dictyostelium discoideum (Social amoeba).